Consider the following 410-residue polypeptide: CinA-like protein (410 aa).

The protein belongs to the CinA family.

This Anaeromyxobacter sp. (strain Fw109-5) protein is CinA-like protein.